Reading from the N-terminus, the 313-residue chain is Ribosomal RNA small subunit methyltransferase H (313 aa).

S-adenosyl-L-methionine is bound by residues 36–38 (GGH), Asp-56, Phe-80, Asp-102, and Gln-109.

The protein belongs to the methyltransferase superfamily. RsmH family.

Its subcellular location is the cytoplasm. The catalysed reaction is cytidine(1402) in 16S rRNA + S-adenosyl-L-methionine = N(4)-methylcytidine(1402) in 16S rRNA + S-adenosyl-L-homocysteine + H(+). Specifically methylates the N4 position of cytidine in position 1402 (C1402) of 16S rRNA. The chain is Ribosomal RNA small subunit methyltransferase H from Actinobacillus pleuropneumoniae serotype 3 (strain JL03).